The following is a 345-amino-acid chain: S-adenosylmethionine:tRNA ribosyltransferase-isomerase (345 aa).

Belongs to the QueA family. In terms of assembly, monomer.

Its subcellular location is the cytoplasm. It carries out the reaction 7-aminomethyl-7-carbaguanosine(34) in tRNA + S-adenosyl-L-methionine = epoxyqueuosine(34) in tRNA + adenine + L-methionine + 2 H(+). It functions in the pathway tRNA modification; tRNA-queuosine biosynthesis. Its function is as follows. Transfers and isomerizes the ribose moiety from AdoMet to the 7-aminomethyl group of 7-deazaguanine (preQ1-tRNA) to give epoxyqueuosine (oQ-tRNA). In Helicobacter acinonychis (strain Sheeba), this protein is S-adenosylmethionine:tRNA ribosyltransferase-isomerase.